A 183-amino-acid chain; its full sequence is NAD(P)H-quinone oxidoreductase subunit J (183 aa).

Residues 1 to 21 form a disordered region; sequence MAEENAQEKQAPPSAGEQSEP.

This sequence belongs to the complex I 30 kDa subunit family. As to quaternary structure, NDH-1 can be composed of about 15 different subunits; different subcomplexes with different compositions have been identified which probably have different functions.

Its subcellular location is the cellular thylakoid membrane. It catalyses the reaction a plastoquinone + NADH + (n+1) H(+)(in) = a plastoquinol + NAD(+) + n H(+)(out). It carries out the reaction a plastoquinone + NADPH + (n+1) H(+)(in) = a plastoquinol + NADP(+) + n H(+)(out). Functionally, NDH-1 shuttles electrons from an unknown electron donor, via FMN and iron-sulfur (Fe-S) centers, to quinones in the respiratory and/or the photosynthetic chain. The immediate electron acceptor for the enzyme in this species is believed to be plastoquinone. Couples the redox reaction to proton translocation, and thus conserves the redox energy in a proton gradient. Cyanobacterial NDH-1 also plays a role in inorganic carbon-concentration. The sequence is that of NAD(P)H-quinone oxidoreductase subunit J from Synechococcus sp. (strain JA-2-3B'a(2-13)) (Cyanobacteria bacterium Yellowstone B-Prime).